The following is a 90-amino-acid chain: Small ribosomal subunit protein uS15 (90 aa).

The protein belongs to the universal ribosomal protein uS15 family. In terms of assembly, part of the 30S ribosomal subunit. Forms a bridge to the 50S subunit in the 70S ribosome, contacting the 23S rRNA.

In terms of biological role, one of the primary rRNA binding proteins, it binds directly to 16S rRNA where it helps nucleate assembly of the platform of the 30S subunit by binding and bridging several RNA helices of the 16S rRNA. Its function is as follows. Forms an intersubunit bridge (bridge B4) with the 23S rRNA of the 50S subunit in the ribosome. This is Small ribosomal subunit protein uS15 from Herpetosiphon aurantiacus (strain ATCC 23779 / DSM 785 / 114-95).